A 684-amino-acid polypeptide reads, in one-letter code: Probable metal-nicotianamine transporter YSL9 (684 aa).

Over residues 1–10 the composition is skewed to basic residues; it reads MKQERRRKRQ. The disordered stretch occupies residues 1 to 55; that stretch reads MKQERRRKRQPGPPRLELVVAHPREEEMAGLDGGGDAEEGATHARGGGGAPPPWR. The next 14 membrane-spanning stretches (helical) occupy residues 58 to 78, 82 to 102, 130 to 150, 174 to 194, 234 to 254, 295 to 315, 341 to 361, 402 to 422, 430 to 450, 462 to 482, 515 to 535, 568 to 588, 612 to 632, and 642 to 662; these read LTARGLVASLAVGAMYSVIVM, LTTGLVPTLNVSAALIAFVVL, CAVACYSIAVGGGFGSYLLGL, GIAWMTGFLLAVSFVGLLALV, VNGFTKYFAMSFFWSFFQWFY, LVNLSLLLGAILSWGVMWPLI, FICVALILGDGLYNFVKIVAL, LAFSGYLGLTFIAVIAIPMMF, VVIAYLLAPALGFCNAYGAGL, IALFILAAWAGKDSGVVAGLV, IIAQAIGTVMGCVISPLTFFL, FSALPQHCLQLCYGFFGFAVA, VPFLVGASFAIDMCIGSLIVF, and AALMVPAVASGLICGDGLWIF.

This sequence belongs to the YSL (TC 2.A.67.2) family.

The protein localises to the membrane. May be involved in the transport of nicotianamine-chelated metals. In Oryza sativa subsp. japonica (Rice), this protein is Probable metal-nicotianamine transporter YSL9 (YSL9).